A 294-amino-acid chain; its full sequence is Bifunctional protein FolD (294 aa).

NADP(+) is bound by residues 166 to 168 (GRS), S191, and I232.

Belongs to the tetrahydrofolate dehydrogenase/cyclohydrolase family. In terms of assembly, homodimer.

It carries out the reaction (6R)-5,10-methylene-5,6,7,8-tetrahydrofolate + NADP(+) = (6R)-5,10-methenyltetrahydrofolate + NADPH. The enzyme catalyses (6R)-5,10-methenyltetrahydrofolate + H2O = (6R)-10-formyltetrahydrofolate + H(+). Its pathway is one-carbon metabolism; tetrahydrofolate interconversion. Catalyzes the oxidation of 5,10-methylenetetrahydrofolate to 5,10-methenyltetrahydrofolate and then the hydrolysis of 5,10-methenyltetrahydrofolate to 10-formyltetrahydrofolate. This chain is Bifunctional protein FolD, found in Bradyrhizobium sp. (strain ORS 278).